Consider the following 341-residue polypeptide: Malate dehydrogenase 2, mitochondrial (341 aa).

The transit peptide at 1 to 22 (MFRSMIVRSASPVKQGLLRRGF) directs the protein to the mitochondrion. NAD(+) contacts are provided by residues 36–42 (GAAGGIG) and Asp62. Substrate is bound by residues Arg109 and Arg115. Residues Asn122 and 145–147 (ISN) each bind NAD(+). The substrate site is built by Asn147 and Arg181. His205 (proton acceptor) is an active-site residue. An NAD(+)-binding site is contributed by Met256.

Belongs to the LDH/MDH superfamily. MDH type 1 family. In terms of assembly, homodimer. In terms of tissue distribution, expressed in rosette leaves at low levels.

It is found in the mitochondrion matrix. The catalysed reaction is (S)-malate + NAD(+) = oxaloacetate + NADH + H(+). Catalyzes a reversible NAD-dependent dehydrogenase reaction involved in central metabolism and redox homeostasis between organelle compartments. Required for carbon dioxide and energy partitioning in leaves. May limit photorespiration during the dark phase. Can convert 2-ketoglutarate to L-2-hydroxyglutarate in vitro. The sequence is that of Malate dehydrogenase 2, mitochondrial from Arabidopsis thaliana (Mouse-ear cress).